The primary structure comprises 469 residues: UDP-N-acetylmuramate--L-alanine ligase (469 aa).

Residue 120–126 participates in ATP binding; that stretch reads GTHGKTT.

It belongs to the MurCDEF family.

It is found in the cytoplasm. The catalysed reaction is UDP-N-acetyl-alpha-D-muramate + L-alanine + ATP = UDP-N-acetyl-alpha-D-muramoyl-L-alanine + ADP + phosphate + H(+). It participates in cell wall biogenesis; peptidoglycan biosynthesis. Its function is as follows. Cell wall formation. The sequence is that of UDP-N-acetylmuramate--L-alanine ligase from Acetivibrio thermocellus (strain ATCC 27405 / DSM 1237 / JCM 9322 / NBRC 103400 / NCIMB 10682 / NRRL B-4536 / VPI 7372) (Clostridium thermocellum).